A 162-amino-acid polypeptide reads, in one-letter code: Large ribosomal subunit protein uL10 (162 aa).

It belongs to the universal ribosomal protein uL10 family. As to quaternary structure, part of the ribosomal stalk of the 50S ribosomal subunit. The N-terminus interacts with L11 and the large rRNA to form the base of the stalk. The C-terminus forms an elongated spine to which L12 dimers bind in a sequential fashion forming a multimeric L10(L12)X complex.

In terms of biological role, forms part of the ribosomal stalk, playing a central role in the interaction of the ribosome with GTP-bound translation factors. The polypeptide is Large ribosomal subunit protein uL10 (Borrelia recurrentis (strain A1)).